Here is a 477-residue protein sequence, read N- to C-terminus: Histidine permease HisP (477 aa).

The next 12 membrane-spanning stretches (helical) occupy residues 16-36, 40-60, 86-106, 126-146, 156-176, 192-212, 238-258, 284-304, 337-359, 364-386, 408-428, and 437-457; these read ITMIALGGTIGTGLFLTSGAT, AGPWGAVLAYCFIGIMVYFVM, PAFGFALGWNYWLNGAITIAV, IFSGIATVLIFIINVMAVGAF, IKVITIVLFLAIGLLTIFGVL, HGFVGGISGFVGVLLIAGFSF, SIFWRILLFYIFSIIVIAAII, IGFAVAASVMNAVILTSVISS, IPFYALLATTIICFIAFLTGIFG, LFLIDLSSLTGFLAWLGISVSHI, WFPFGPIVALLMTGAIAINLD, and WGEGLALYAAIPIFIVLYFGY.

The protein belongs to the amino acid-polyamine-organocation (APC) superfamily. Amino acid transporter (AAT) (TC 2.A.3.1) family.

The protein resides in the cell membrane. Functionally, involved in histidine uptake. Has low affinity for arginine and lysine. Plays no significant role in the excretion of accumulated histidine. The polypeptide is Histidine permease HisP (Lactococcus lactis subsp. cremoris (strain MG1363)).